Here is a 180-residue protein sequence, read N- to C-terminus: ATP synthase subunit delta (180 aa).

Belongs to the ATPase delta chain family. As to quaternary structure, F-type ATPases have 2 components, F(1) - the catalytic core - and F(0) - the membrane proton channel. F(1) has five subunits: alpha(3), beta(3), gamma(1), delta(1), epsilon(1). F(0) has three main subunits: a(1), b(2) and c(10-14). The alpha and beta chains form an alternating ring which encloses part of the gamma chain. F(1) is attached to F(0) by a central stalk formed by the gamma and epsilon chains, while a peripheral stalk is formed by the delta and b chains.

The protein localises to the cell membrane. In terms of biological role, f(1)F(0) ATP synthase produces ATP from ADP in the presence of a proton or sodium gradient. F-type ATPases consist of two structural domains, F(1) containing the extramembraneous catalytic core and F(0) containing the membrane proton channel, linked together by a central stalk and a peripheral stalk. During catalysis, ATP synthesis in the catalytic domain of F(1) is coupled via a rotary mechanism of the central stalk subunits to proton translocation. Functionally, this protein is part of the stalk that links CF(0) to CF(1). It either transmits conformational changes from CF(0) to CF(1) or is implicated in proton conduction. This is ATP synthase subunit delta from Ligilactobacillus salivarius (strain UCC118) (Lactobacillus salivarius).